The following is a 475-amino-acid chain: Ribulose bisphosphate carboxylase large chain (475 aa).

A propeptide spanning residues 1 to 2 is cleaved from the precursor; the sequence is MS. Pro-3 carries the post-translational modification N-acetylproline. Lys-14 is subject to N6,N6,N6-trimethyllysine. Positions 123 and 173 each coordinate substrate. The Proton acceptor role is filled by Lys-175. Lys-177 is a binding site for substrate. The Mg(2+) site is built by Lys-201, Asp-203, and Glu-204. An N6-carboxylysine modification is found at Lys-201. His-294 functions as the Proton acceptor in the catalytic mechanism. Residues Arg-295, His-327, and Ser-379 each contribute to the substrate site.

Belongs to the RuBisCO large chain family. Type I subfamily. In terms of assembly, heterohexadecamer of 8 large chains and 8 small chains; disulfide-linked. The disulfide link is formed within the large subunit homodimers. Requires Mg(2+) as cofactor. The disulfide bond which can form in the large chain dimeric partners within the hexadecamer appears to be associated with oxidative stress and protein turnover.

Its subcellular location is the plastid. The protein localises to the chloroplast. It catalyses the reaction 2 (2R)-3-phosphoglycerate + 2 H(+) = D-ribulose 1,5-bisphosphate + CO2 + H2O. The enzyme catalyses D-ribulose 1,5-bisphosphate + O2 = 2-phosphoglycolate + (2R)-3-phosphoglycerate + 2 H(+). Its function is as follows. RuBisCO catalyzes two reactions: the carboxylation of D-ribulose 1,5-bisphosphate, the primary event in carbon dioxide fixation, as well as the oxidative fragmentation of the pentose substrate in the photorespiration process. Both reactions occur simultaneously and in competition at the same active site. This chain is Ribulose bisphosphate carboxylase large chain, found in Spirogyra maxima (Green alga).